Consider the following 180-residue polypeptide: MSESELKLVARRIRSFPDFPIPGVLFRDISPLLKDPDSFRASIRLLASHLKSTHSGKIDYIAGLDSRGFLFGPSLAQELGVGCVLIRKQGKLPGPTISASYALEYGKAELEIQKDALEPGQRVVIVDDLLATGGTMFAACDLLHQLRAEVVECVSLVELTSLKGRERLGPIPFFSLLQYD.

Ser-2 bears the N-acetylserine mark. 3 positions are modified to phosphoserine: Ser-4, Ser-15, and Ser-30. Tyr-60 is subject to Phosphotyrosine. Ser-66 carries the phosphoserine modification. An N6-acetyllysine modification is found at Lys-114. Phosphothreonine is present on Thr-135.

Belongs to the purine/pyrimidine phosphoribosyltransferase family. As to quaternary structure, homodimer.

It is found in the cytoplasm. The enzyme catalyses AMP + diphosphate = 5-phospho-alpha-D-ribose 1-diphosphate + adenine. It participates in purine metabolism; AMP biosynthesis via salvage pathway; AMP from adenine: step 1/1. In terms of biological role, catalyzes a salvage reaction resulting in the formation of AMP, that is energically less costly than de novo synthesis. The polypeptide is Adenine phosphoribosyltransferase (Mus pahari (Gairdner's shrew-mouse)).